Here is a 643-residue protein sequence, read N- to C-terminus: Inner kinetochore subunit cnp3 (643 aa).

Disordered regions lie at residues 55-209 and 224-386; these read SIHL…AFPD and SIKD…QSDS. 2 stretches are compositionally biased toward low complexity: residues 85–97 and 104–125; these read AASDEASHASSSD and DIPSSPLLMNSRALRASRGSSG. Over residues 166–185 the composition is skewed to basic and acidic residues; that stretch reads DFSRIKASPDRKKFEPRRST. Composition is skewed to polar residues over residues 235–261, 295–304, and 313–322; these read YIQTISKPRRSYVQNNKSEQTIKPSKQ, LNRSLANNSQ, and KPLQESSINS. 2 stretches are compositionally biased toward basic residues: residues 332-341 and 360-370; these read VKRKRGRPRK and GAKKPAIRNAK. Positions 333–345 form a DNA-binding region, a.T hook; the sequence is KRKRGRPRKNKLE.

Belongs to the CENP-C/MIF2 family. In terms of assembly, component of the inner kinetochore constitutive centromere-associated network (CCAN) (also known as central kinetochore Sim4 complex in fission yeast), which is composed of at least cnl2, cnp3, cnp20, fta1, fta2, fta3, fta4, fta6, fta7, mal2, mhf1, mhf2, mis6, mis15, mis17, sim4 and wip1.

The protein localises to the nucleus. The protein resides in the nucleoplasm. Functionally, component of the kinetochore, a multiprotein complex that assembles on centromeric DNA and attaches chromosomes to spindle microtubules, mediating chromosome segregation and sister chromatid segregation during meiosis and mitosis. Component of the inner kinetochore constitutive centromere-associated network (CCAN), which serves as a structural platform for outer kinetochore assembly. The protein is Inner kinetochore subunit cnp3 (cnp3) of Schizosaccharomyces pombe (strain 972 / ATCC 24843) (Fission yeast).